Consider the following 97-residue polypeptide: Co-chaperonin GroES (97 aa).

Belongs to the GroES chaperonin family. In terms of assembly, heptamer of 7 subunits arranged in a ring. Interacts with the chaperonin GroEL.

It is found in the cytoplasm. Its function is as follows. Together with the chaperonin GroEL, plays an essential role in assisting protein folding. The GroEL-GroES system forms a nano-cage that allows encapsulation of the non-native substrate proteins and provides a physical environment optimized to promote and accelerate protein folding. GroES binds to the apical surface of the GroEL ring, thereby capping the opening of the GroEL channel. In Buchnera aphidicola subsp. Pterocomma populeum, this protein is Co-chaperonin GroES.